A 158-amino-acid chain; its full sequence is Transcription elongation factor GreA (158 aa).

Residues 45-72 (AEYHAAREQQSFIEGRIKQLEGELSHAE) adopt a coiled-coil conformation.

Belongs to the GreA/GreB family.

In terms of biological role, necessary for efficient RNA polymerase transcription elongation past template-encoded arresting sites. The arresting sites in DNA have the property of trapping a certain fraction of elongating RNA polymerases that pass through, resulting in locked ternary complexes. Cleavage of the nascent transcript by cleavage factors such as GreA or GreB allows the resumption of elongation from the new 3'terminus. GreA releases sequences of 2 to 3 nucleotides. This is Transcription elongation factor GreA from Xylella fastidiosa (strain 9a5c).